A 932-amino-acid chain; its full sequence is Isoleucine--tRNA ligase (932 aa).

Positions 58-68 match the 'HIGH' region motif; sequence PYANGDIHIGH. Residue Glu559 coordinates L-isoleucyl-5'-AMP. Positions 600–604 match the 'KMSKS' region motif; sequence KMSKS. An ATP-binding site is contributed by Lys603. 4 residues coordinate Zn(2+): Cys895, Cys898, Cys915, and Cys918.

The protein belongs to the class-I aminoacyl-tRNA synthetase family. IleS type 1 subfamily. Monomer. Zn(2+) is required as a cofactor.

It is found in the cytoplasm. The catalysed reaction is tRNA(Ile) + L-isoleucine + ATP = L-isoleucyl-tRNA(Ile) + AMP + diphosphate. In terms of biological role, catalyzes the attachment of isoleucine to tRNA(Ile). As IleRS can inadvertently accommodate and process structurally similar amino acids such as valine, to avoid such errors it has two additional distinct tRNA(Ile)-dependent editing activities. One activity is designated as 'pretransfer' editing and involves the hydrolysis of activated Val-AMP. The other activity is designated 'posttransfer' editing and involves deacylation of mischarged Val-tRNA(Ile). The polypeptide is Isoleucine--tRNA ligase (Saccharophagus degradans (strain 2-40 / ATCC 43961 / DSM 17024)).